We begin with the raw amino-acid sequence, 56 residues long: Small ribosomal subunit protein uS14 (56 aa).

Zn(2+)-binding residues include Cys21, Cys24, Cys39, and Cys42.

Belongs to the universal ribosomal protein uS14 family. It depends on Zn(2+) as a cofactor.

This chain is Small ribosomal subunit protein uS14 (rps29A), found in Guillardia theta (Cryptophyte).